The sequence spans 557 residues: Dihydroxy-acid dehydratase (557 aa).

Residue Cys-49 coordinates [2Fe-2S] cluster. Asp-81 lines the Mg(2+) pocket. Cys-122 provides a ligand contact to [2Fe-2S] cluster. 2 residues coordinate Mg(2+): Asp-123 and Lys-124. The residue at position 124 (Lys-124) is an N6-carboxylysine. [2Fe-2S] cluster is bound at residue Cys-194. Glu-446 contacts Mg(2+). Ser-472 acts as the Proton acceptor in catalysis.

This sequence belongs to the IlvD/Edd family. Homodimer. Requires [2Fe-2S] cluster as cofactor. It depends on Mg(2+) as a cofactor.

The enzyme catalyses (2R)-2,3-dihydroxy-3-methylbutanoate = 3-methyl-2-oxobutanoate + H2O. The catalysed reaction is (2R,3R)-2,3-dihydroxy-3-methylpentanoate = (S)-3-methyl-2-oxopentanoate + H2O. Its pathway is amino-acid biosynthesis; L-isoleucine biosynthesis; L-isoleucine from 2-oxobutanoate: step 3/4. It functions in the pathway amino-acid biosynthesis; L-valine biosynthesis; L-valine from pyruvate: step 3/4. Functions in the biosynthesis of branched-chain amino acids. Catalyzes the dehydration of (2R,3R)-2,3-dihydroxy-3-methylpentanoate (2,3-dihydroxy-3-methylvalerate) into 2-oxo-3-methylpentanoate (2-oxo-3-methylvalerate) and of (2R)-2,3-dihydroxy-3-methylbutanoate (2,3-dihydroxyisovalerate) into 2-oxo-3-methylbutanoate (2-oxoisovalerate), the penultimate precursor to L-isoleucine and L-valine, respectively. The sequence is that of Dihydroxy-acid dehydratase from Prochlorococcus marinus (strain MIT 9312).